The following is an 874-amino-acid chain: MTKDKNSPGLKKKSQSVDINAPGFNPLAGAGKQTPQASKPPAPKTPIIEEEQNNAANTQKHPSRRSELKRFYTIDTGQKKTLDKKDGRRMSFQKPKGTIEYTVESRDSLNSIALKFDTTPNELVQLNKLFSRAVVTGQVLYVPDPEYVSSVESSPSLSPVSPLSPTSSEAEFDKTTNPDVHPTEATPSSTFTGIRPARVVSSTSEEEEAFTEKFLKINCKYITSGKGTVSGVLLVTPNNIMFDPHKNDPLVQENGCEEYGIMCPMEEVMSAAMYKEILDSKIKESLPIDIDQLSGRDFCHSKKMTGSNTEEIDSRIRDAGNDSASTAPRSTEESLSEDVFTESELSPIREELVSSDELRQDKSSGASSESVQTVNQAEVESLTVKSESTGTPGHLRSDTEHSTNEVGTLCHKTDLNNLEMAIKEDQIADNFQGISGPKEDSTSIKGNSDQDSFLHENSLHQEESQKENMPCGETAEFKQKQSVNKGKQGKEQNQDSQTEAEELRKLWKTHTMQQTKQQRENIQQVSQKEAKHKITSADGHIESSALLKEKQRHRLHKFLCLRVGKPMRKTFVSQASATMQQYAQRDKKHEYWFAVPQERTDHLYAFFIQWSPEIYAEDTGEYTREPGFIVVKKIEESETIEDSSNQAAAREWEVVSVAEYHRRIDALNTEELRTLCRRLQITTREDINSKQVATVKADLESESFRPNLSDPSELLLPDQIEKLTKHLPPRTIGYPWTLVYGTGKHGTSLKTLYRTMTGLDTPVLMVIKDSDGQVFGALASEPLKVSDGFYGTGETFVFTFCPEFEVFKWTGDNMFFIKGDMDSLAFGGGGGEFALWLDGDLYHGRSHSCKTFGNRTLSKKEDFFIQDIEIWAFE.

Residues 1-89 form a disordered region; it reads MTKDKNSPGL…KTLDKKDGRR (89 aa). Over residues 64–89 the composition is skewed to basic and acidic residues; it reads RRSELKRFYTIDTGQKKTLDKKDGRR. Serine 91 is modified (phosphoserine). The region spanning 99-142 is the LysM domain; the sequence is IEYTVESRDSLNSIALKFDTTPNELVQLNKLFSRAVVTGQVLYV. Residue threonine 119 is modified to Phosphothreonine. Positions 151-169 are enriched in low complexity; that stretch reads VESSPSLSPVSPLSPTSSE. The segment at 151–194 is disordered; that stretch reads VESSPSLSPVSPLSPTSSEAEFDKTTNPDVHPTEATPSSTFTGI. 3 positions are modified to phosphoserine: serine 201, serine 202, and serine 204. One can recognise a GRAM domain in the interval 208–275; the sequence is EAFTEKFLKI…EEVMSAAMYK (68 aa). 3 positions are modified to phosphoserine: serine 294, serine 334, and serine 336. Disordered stretches follow at residues 299 to 406 and 431 to 537; these read CHSK…TNEV and FQGI…ITSA. The residue at position 341 (threonine 341) is a Phosphothreonine. Serine 346 bears the Phosphoserine mark. Positions 347–362 are enriched in basic and acidic residues; that stretch reads PIREELVSSDELRQDK. Residues 363 to 391 are compositionally biased toward polar residues; that stretch reads SSGASSESVQTVNQAEVESLTVKSESTGT. Residues 452 to 466 show a composition bias toward basic and acidic residues; it reads SFLHENSLHQEESQK. Serine 496 is subject to Phosphoserine. Positions 510 to 527 are enriched in polar residues; it reads HTMQQTKQQRENIQQVSQ. Residues 551–578 form a mediates oxidative antimutator activity region; sequence QRHRLHKFLCLRVGKPMRKTFVSQASAT. In terms of domain architecture, TLDc spans 713–874; the sequence is ELLLPDQIEK…IQDIEIWAFE (162 aa).

It belongs to the OXR1 family.

The protein resides in the mitochondrion. Its function is as follows. May be involved in protection from oxidative damage. The chain is Oxidation resistance protein 1 (OXR1) from Homo sapiens (Human).